The primary structure comprises 324 residues: Polycomb complex protein BMI-1 (324 aa).

The RING-type zinc-finger motif lies at 18-57; sequence CVLCGGYFIDATTIIECLHSFCKTCIVRYLETSKYCPICD. A Nuclear localization signal motif is present at residues 81 to 95; sequence KLVPGLFKNEMKRRR. The interaction with PHC2 stretch occupies residues 160 to 180; the sequence is RYLRCPAAMTVMHLRKFLRSK. The interval 162–226 is interaction with E4F1; sequence LRCPAAMTVM…GPLPLKYRVR (65 aa). The disordered stretch occupies residues 232–324; the sequence is MKMSHQRDGL…LNGSSATSSG (93 aa). The segment covering 264–276 has biased composition (low complexity); that stretch reads PSTSSCLPSPSTP. Residues 277 to 307 are compositionally biased toward polar residues; it reads VQSPHPQFPHISSTMNGTSNSPSANHQSSFA. Residues 313–324 show a composition bias toward low complexity; sequence SSLNGSSATSSG.

As to quaternary structure, component of a PRC1-like complex. Identified in a PRC1-like HPRC-H complex with CBX2, CBX4, CBX8, PHC1, PHC2, PHC3, RING1 and RNF2. Interacts with RNF2/RING2. Interacts with RING1. Part of a complex that contains RNF2, UB2D3 and BMI1, where RNF2 and BMI1 form a tight heterodimer, and UB2D3 interacts only with RNF2. The complex composed of RNF2, UB2D3 and BMI1 binds nucleosomes, and has activity only with nucleosomal histone H2A. Interacts with CBX7 and CBX8. Interacts with SPOP. Part of a complex consisting of BMI1, CUL3 and SPOP. Interacts with E4F1. Interacts with PHC2. Interacts with zinc finger protein ZNF277. May be part of a complex including at least ZNF277, BMI1 and RNF2/RING2. In terms of processing, may be polyubiquitinated; which does not lead to proteasomal degradation. Monoubiquitinated. Detected in most organs with high expression levels in thymus, heart, brain and testis.

It is found in the nucleus. Its subcellular location is the cytoplasm. Its function is as follows. Component of a Polycomb group (PcG) multiprotein PRC1-like complex, a complex class required to maintain the transcriptionally repressive state of many genes, including Hox genes, throughout development. PcG PRC1 complex acts via chromatin remodeling and modification of histones; it mediates monoubiquitination of histone H2A 'Lys-119', rendering chromatin heritably changed in its expressibility. The complex composed of RNF2, UB2D3 and BMI1 binds nucleosomes, and has activity only with nucleosomal histone H2A. In the PRC1-like complex, regulates the E3 ubiquitin-protein ligase activity of RNF2/RING2. In Mus musculus (Mouse), this protein is Polycomb complex protein BMI-1 (Bmi1).